The primary structure comprises 351 residues: DNA polymerase IV (351 aa).

Residues Ile-4–Gly-185 form the UmuC domain. The Mg(2+) site is built by Asp-8 and Asp-103. The active site involves Glu-104.

Belongs to the DNA polymerase type-Y family. In terms of assembly, monomer. The cofactor is Mg(2+).

The protein resides in the cytoplasm. The enzyme catalyses DNA(n) + a 2'-deoxyribonucleoside 5'-triphosphate = DNA(n+1) + diphosphate. Its function is as follows. Poorly processive, error-prone DNA polymerase involved in untargeted mutagenesis. Copies undamaged DNA at stalled replication forks, which arise in vivo from mismatched or misaligned primer ends. These misaligned primers can be extended by PolIV. Exhibits no 3'-5' exonuclease (proofreading) activity. May be involved in translesional synthesis, in conjunction with the beta clamp from PolIII. The polypeptide is DNA polymerase IV (Cronobacter sakazakii (strain ATCC BAA-894) (Enterobacter sakazakii)).